The primary structure comprises 270 residues: Urease accessory protein UreD (270 aa).

This sequence belongs to the UreD family. UreD, UreF and UreG form a complex that acts as a GTP-hydrolysis-dependent molecular chaperone, activating the urease apoprotein by helping to assemble the nickel containing metallocenter of UreC. The UreE protein probably delivers the nickel.

It localises to the cytoplasm. In terms of biological role, required for maturation of urease via the functional incorporation of the urease nickel metallocenter. The polypeptide is Urease accessory protein UreD (Microcystis aeruginosa (strain NIES-843 / IAM M-2473)).